A 182-amino-acid polypeptide reads, in one-letter code: MGLAFGKLFSRFFGKKDMRILMVGLDAAGKTTILYKLKLGEIVTTIPTIGFNVETVEFKNINFTVWDVGGQDKIRPLWRHYFQNTQGLIFVVDSNDRERIQEACDELTKMLNEDELRDAVLLVFCNKQDLPNAMSVAEVTDKLNLHSLRSRKWYIQSTCATSGDGLYEGLDWLSNTLTSSSK.

Residue glycine 2 is the site of N-myristoyl glycine attachment. GTP is bound by residues 24 to 31 (GLDAAGKT), 67 to 71 (DVGGQ), and 126 to 129 (NKQD).

The protein belongs to the small GTPase superfamily. Arf family.

It localises to the golgi apparatus. It carries out the reaction GTP + H2O = GDP + phosphate + H(+). In terms of biological role, GTP-binding protein involved in protein trafficking; may modulate vesicle budding and uncoating within the Golgi apparatus. In Dictyostelium discoideum (Social amoeba), this protein is ADP-ribosylation factor 1 (arfA).